The primary structure comprises 286 residues: Shikimate dehydrogenase (NADP(+)) (286 aa).

Residues 19-21 (SLS) and T66 each bind shikimate. Catalysis depends on K70, which acts as the Proton acceptor. Positions 91 and 107 each coordinate shikimate. NADP(+)-binding positions include 129-133 (GSGGA) and L229. Y231 contributes to the shikimate binding site. Position 252 (G252) interacts with NADP(+).

Belongs to the shikimate dehydrogenase family. Homodimer.

It carries out the reaction shikimate + NADP(+) = 3-dehydroshikimate + NADPH + H(+). Its pathway is metabolic intermediate biosynthesis; chorismate biosynthesis; chorismate from D-erythrose 4-phosphate and phosphoenolpyruvate: step 4/7. Involved in the biosynthesis of the chorismate, which leads to the biosynthesis of aromatic amino acids. Catalyzes the reversible NADPH linked reduction of 3-dehydroshikimate (DHSA) to yield shikimate (SA). This chain is Shikimate dehydrogenase (NADP(+)), found in Prochlorococcus marinus (strain MIT 9215).